A 406-amino-acid chain; its full sequence is MDNLDEDDLAFFSKPIKKPPLNYAKQLIASSSDSEEESELDTNKQALEHINAQKNITHNENKSAEPLSRQSTILDADEGNQDVSDTTPNACLNEGRHSPKSAISCVTQPVSPVYNTRAAANLRNNSINSEAALSTTSSLLDDDFARRLEEIDRQVQEFEKSSSDMDVQIHTHKREIEEDDDNTSADVPLLKHSKSDHSTLYHSKSEFSTNEPVISVVLQLAVIGQRIPNSNISLPRDWEAPLFFKVKSNQQFRRVRIAYSERKKVDNVVLVFQNQRLWDYGTPKGAGMLKVDTRLVVHAYCHSDFISLKRIKELEVEKLSSVTEDSTAQTCKLITLLLRSSKSEDLRLSIPVDFTVKDLIKRYCTEVKISFHERIRLEFEGEWLDPNDQVQSTELEDEDQVSVVLD.

In terms of assembly, interacts with rfp1 and smc5. Phosphorylated by cds1.

The protein resides in the nucleus. Required for repair of DNA double strand breaks which occur during replication, or induced by UV or gamma radiation, via recombination between sister chromatids. This has a subsequent role in the maintenance of chromosome structure. May work in conjunction with the Smc5-Smc6 complex. This is DNA repair protein rad60 (rad60) from Schizosaccharomyces pombe (strain 972 / ATCC 24843) (Fission yeast).